Here is a 400-residue protein sequence, read N- to C-terminus: Probable peptidoglycan glycosyltransferase FtsW (400 aa).

The Cytoplasmic segment spans residues 1–29 (MVIERIKHLASPLQDWVFTPSPKVMFDRQ). The chain crosses the membrane as a helical span at residues 30-50 (LIWIALGLMLTGLVMVASASF). Residues 51 to 60 (PISTRLTGQP) are Periplasmic-facing. The chain crosses the membrane as a helical span at residues 61–81 (FHFMMRHMLFVFLALSISSIV). Over 82 to 95 (LRIELNKWLKYSSH) the chain is Cytoplasmic. The helical transmembrane segment at 96–116 (LLLISLLLLAAVLVVGKSVNG) threads the bilayer. Residues 117-122 (AARWLP) are Periplasmic-facing. Residues 123 to 143 (LGIFNLQPAEVAKLSLFVFIA) traverse the membrane as a helical segment. Over 144 to 155 (GYLVRRHGEVRD) the chain is Cytoplasmic. A helical transmembrane segment spans residues 156–176 (SFRGFVKPLLVLITLAFFLLM). Residues 177 to 178 (QP) lie on the Periplasmic side of the membrane. Residues 179–199 (DLGTTVVMFVTTIAMLFIAGA) traverse the membrane as a helical segment. Position 200 (Lys-200) is a topological domain, cytoplasmic. A helical membrane pass occupies residues 201–221 (LWQFIALVMGGISLVIVLILA). Over 222 to 290 (EPYRMRRVTS…VFAVIAEELG (69 aa)) the chain is Periplasmic. The helical transmembrane segment at 291-311 (FVGVCLVLCLIFALVFKALLI) threads the bilayer. Residues 312-321 (GRKCLAHDQR) lie on the Cytoplasmic side of the membrane. The chain crosses the membrane as a helical span at residues 322–342 (FGGFLAFGIGIWFAFQTLVNV). The Periplasmic portion of the chain corresponds to 343 to 356 (GAAAGIVPTKGLTL). The helical transmembrane segment at 357–377 (PLISYGGSSLIIMSVAVSLLI) threads the bilayer. The Cytoplasmic portion of the chain corresponds to 378 to 400 (RIDHECRVYLANEPPRSENEEQK).

This sequence belongs to the SEDS family. FtsW subfamily.

It localises to the cell inner membrane. It carries out the reaction [GlcNAc-(1-&gt;4)-Mur2Ac(oyl-L-Ala-gamma-D-Glu-L-Lys-D-Ala-D-Ala)](n)-di-trans,octa-cis-undecaprenyl diphosphate + beta-D-GlcNAc-(1-&gt;4)-Mur2Ac(oyl-L-Ala-gamma-D-Glu-L-Lys-D-Ala-D-Ala)-di-trans,octa-cis-undecaprenyl diphosphate = [GlcNAc-(1-&gt;4)-Mur2Ac(oyl-L-Ala-gamma-D-Glu-L-Lys-D-Ala-D-Ala)](n+1)-di-trans,octa-cis-undecaprenyl diphosphate + di-trans,octa-cis-undecaprenyl diphosphate + H(+). It participates in cell wall biogenesis; peptidoglycan biosynthesis. Peptidoglycan polymerase that is essential for cell division. The chain is Probable peptidoglycan glycosyltransferase FtsW from Aliivibrio salmonicida (strain LFI1238) (Vibrio salmonicida (strain LFI1238)).